A 266-amino-acid chain; its full sequence is Putative hydro-lyase VF_1377 (266 aa).

It belongs to the D-glutamate cyclase family.

This chain is Putative hydro-lyase VF_1377, found in Aliivibrio fischeri (strain ATCC 700601 / ES114) (Vibrio fischeri).